The following is a 270-amino-acid chain: MKMTSKKMKDELMKRLSRPEWDFQYDSEKEVLRIEQKDSKKGINVSLPGVVAKWEVNKEKAIEEVAYYVQEALIAMHKEENSAAKILPVIRSTSFPKQAEEGNPFIMTDHTAETRIYYALDSNKTYRLIDERLLQKLGLTEQQVREMALFNARSLSYEFKQDTVAGNTFYFLNTNDGYDATRILNESLLQSMREKISGDMVVAVPHQDVLIIADIVNEIGYDIIAQMTMKFFAEGHVPITSLSFVYEDGDFEPIFILAKNRKKTDGKEKG.

This sequence belongs to the UPF0354 family.

The protein is UPF0354 protein BCAH187_A4826 of Bacillus cereus (strain AH187).